The primary structure comprises 102 residues: uncharacterized protein (102 aa).

2 helical membrane-spanning segments follow: residues 33–55 (VLEL…LVVL) and 57–79 (VVGV…VVVA).

The protein resides in the membrane. This is an uncharacterized protein from Saccharomyces cerevisiae (strain ATCC 204508 / S288c) (Baker's yeast).